The chain runs to 589 residues: PTS system mannitol-specific EIICB component (589 aa).

The Cytoplasmic portion of the chain corresponds to 1–25; sequence MERKSSLKVRVQKLGTSLSNMVMPN. One can recognise a PTS EIIC type-2 domain in the interval 14-347; the sequence is LGTSLSNMVM…ILKSDNSDDD (334 aa). The chain crosses the membrane as a helical span at residues 26-47; sequence IGAFIAWGVAASLFIATGYLPN. At 48–51 the chain is on the extracellular side; sequence KALD. The helical transmembrane segment at 52 to 73 threads the bilayer; the sequence is TNVVGPMLKYVLPLLIGYTGGY. At 74–136 the chain is on the cytoplasmic side; that stretch reads NIHKQRGGVI…TGFEMLVNNF (63 aa). The helical transmembrane segment at 137–158 threads the bilayer; sequence SLGLIGFALMVLAFFVIGPVVA. Residues 159–167 are Extracellular-facing; the sequence is QLTEWVGIG. A helical membrane pass occupies residues 168-188; the sequence is VEAIVKVHLLPLANLIIEPAK. The Cytoplasmic portion of the chain corresponds to 189–275; that stretch reads ILFLNNALNH…VMMKPAMFLA (87 aa). A helical transmembrane segment spans residues 276–295; sequence VIAGGLTGTFTFQTLGAGLT. The Extracellular portion of the chain corresponds to 296–317; it reads APASPGSIIAIMGMSPKGWGPH. Residues 318–339 form a helical membrane-spanning segment; that stretch reads LVVLAGVFAAAVASFLVASIIL. Residues 340–589 are Cytoplasmic-facing; sequence KSDNSDDDSL…YDKLVARMHK (250 aa). One can recognise a PTS EIIB type-2 domain in the interval 383–478; it reads HQIIFACDAG…SLTNGKASGS (96 aa). Residue Cys389 is the Phosphocysteine intermediate; for EIIB activity of the active site. Cys389 carries the post-translational modification Phosphocysteine; by EIIA.

In terms of assembly, homodimer.

The protein resides in the cell membrane. The catalysed reaction is D-mannitol(out) + N(pros)-phospho-L-histidyl-[protein] = D-mannitol 1-phosphate(in) + L-histidyl-[protein]. In terms of biological role, the phosphoenolpyruvate-dependent sugar phosphotransferase system (sugar PTS), a major carbohydrate active transport system, catalyzes the phosphorylation of incoming sugar substrates concomitantly with their translocation across the cell membrane. The enzyme II CmtAB PTS system is involved in D-mannitol transport. The protein is PTS system mannitol-specific EIICB component of Streptococcus mutans serotype c (strain ATCC 700610 / UA159).